Here is a 587-residue protein sequence, read N- to C-terminus: Ran GTPase-activating protein 1 (587 aa).

Position 2 is an N-acetylalanine (A2). Residue K8 forms a Glycyl lysine isopeptide (Lys-Gly) (interchain with G-Cter in SUMO1); alternate linkage. Residue K8 forms a Glycyl lysine isopeptide (Lys-Gly) (interchain with G-Cter in SUMO2); alternate linkage. K15 participates in a covalent cross-link: Glycyl lysine isopeptide (Lys-Gly) (interchain with G-Cter in SUMO2). S24 carries the phosphoserine modification. LRR repeat units follow at residues 48–71 (FDSL…VIAK), 111–134 (GAQL…GFEA), 207–230 (IGTL…ALAQ), and 235–258 (NPLL…AMAE). K279 is covalently cross-linked (Glycyl lysine isopeptide (Lys-Gly) (interchain with G-Cter in SUMO2)). 2 LRR repeats span residues 292 to 319 (LPKL…AMAD) and 320 to 343 (KAEL…QLQE). S301 bears the Phosphoserine mark. The segment at 357 to 430 (LSDDEDEEEE…EPAPVLSSPP (74 aa)) is disordered. The residue at position 358 (S358) is a Phosphoserine. Over residues 358-397 (SDDEDEEEEEEGEEEEEEAEEEEEEDEEEEEEEEEEEEEE) the composition is skewed to acidic residues. The span at 400–410 (QRGQGEKSATP) shows a compositional bias: polar residues. At T409 the chain carries Phosphothreonine; by CDK2. Phosphoserine occurs at positions 428 and 435. At T436 the chain carries Phosphothreonine. Position 442 is a phosphoserine (S442). A Glycyl lysine isopeptide (Lys-Gly) (interchain with G-Cter in SUMO2) cross-link involves residue K452. The SUMO conjugation signature appears at 523 to 526 (LKSE). K524 participates in a covalent cross-link: Glycyl lysine isopeptide (Lys-Gly) (interchain with G-Cter in SUMO1); alternate. K524 is covalently cross-linked (Glycyl lysine isopeptide (Lys-Gly) (interchain with G-Cter in SUMO2); alternate). N6-acetyllysine; alternate is present on K524. K586 is covalently cross-linked (Glycyl lysine isopeptide (Lys-Gly) (interchain with G-Cter in SUMO2)).

The protein belongs to the RNA1 family. As to quaternary structure, homodimer. Interacts with RAN. Forms a complex with RANBP2/NUP358, NXF1 and NXT1. Forms a tight complex in association with RANBP2/NUP358 and UBE2I/UBC9, the ubiquitin-conjugating enzyme E2. Interacts with UBE2I; the interaction conjugates SUMO1 to RANGAP1, and subsequently stabilizes interactions of sumoylated RANGAP1 with RANBP2/NUP358. The complex composed of RANBP2, SUMO1, RANGAP1 and UBE2I associates with nuclear pore complexes. Identified in a complex composed of RAN, RANBP2, sumoylated RANGAP1, UBE2I and XPO1. Identified in a complex composed of RAN, RANGAP1 and RANBP1. Interacts with TRAF6. Interacts with SUMO1 and SENP1. Interacts (when sumoylated) with MYCBP2; interaction inhibits MYCBP2 E3 ubiquitin-protein ligase activity and promotes MYCBP2 translocation to the nucleus. Phosphorylation occurs before nuclear envelope breakdown and continues throughout mitosis. Phosphorylated by the M-phase kinase cyclin B/Cdk1, in vitro. Differential timimg of dephosphorylation occurs during phases of mitosis. The phosphorylated form remains associated with RANBP2/NUP358 and the SUMO E2-conjugating enzyme, UBE2I, on nuclear pore complex (NPC) diassembly and during mitosis. In terms of processing, sumoylated. Sumoylation is necessary for targeting to the nuclear envelope (NE), and for association with mitotic spindles and kinetochores during mitosis. Also required for interaction with RANBP2 and is mediated by UBE2I. Desumoylated by HINT1. Highly expressed in brain, thymus and testis.

The protein localises to the cytoplasm. Its subcellular location is the nucleus. It is found in the nucleoplasm. The protein resides in the nucleus envelope. It localises to the chromosome. The protein localises to the centromere. Its subcellular location is the kinetochore. It is found in the cytoskeleton. The protein resides in the spindle. GTPase activator for RAN. Converts cytoplasmic GTP-bound RAN to GDP-bound RAN, which is essential for RAN-mediated nuclear import and export. Mediates dissociation of cargo from nuclear export complexes containing XPO1, RAN and RANBP2 after nuclear export. In Homo sapiens (Human), this protein is Ran GTPase-activating protein 1 (RANGAP1).